The following is a 748-amino-acid chain: Acyl-coenzyme A oxidase (748 aa).

This sequence belongs to the acyl-CoA oxidase family. FAD is required as a cofactor.

Its subcellular location is the peroxisome. The catalysed reaction is a 2,3-saturated acyl-CoA + O2 = a (2E)-enoyl-CoA + H2O2. The protein operates within lipid metabolism; peroxisomal fatty acid beta-oxidation. This Candida glabrata (strain ATCC 2001 / BCRC 20586 / JCM 3761 / NBRC 0622 / NRRL Y-65 / CBS 138) (Yeast) protein is Acyl-coenzyme A oxidase (POX1).